The following is a 213-amino-acid chain: MFNQSYLNVYFICGTSNVPSHRTIHEVLEAALKAGITLFQFREKGESALKGNDKLVLAKELQHLCHQYNVPFIVNDDVSLAKEINADGIHVGQDDAKVKEIAQYFTDKIIGLSISDLGEYAKSDLTHVDYIGVGPIYPTPSKHDAHTPVGPEMIATFKEMNPQLPIVAIGGINTSNVAPIVEAGANGISVISAISKSENIEKTVNRFKDFFNN.

4-amino-2-methyl-5-(diphosphooxymethyl)pyrimidine contacts are provided by residues 40 to 44 and asparagine 75; that span reads QFREK. 2 residues coordinate Mg(2+): aspartate 76 and aspartate 95. Serine 113 contributes to the 4-amino-2-methyl-5-(diphosphooxymethyl)pyrimidine binding site. Residue 139–141 coordinates 2-[(2R,5Z)-2-carboxy-4-methylthiazol-5(2H)-ylidene]ethyl phosphate; that stretch reads TPS. Lysine 142 provides a ligand contact to 4-amino-2-methyl-5-(diphosphooxymethyl)pyrimidine. 2-[(2R,5Z)-2-carboxy-4-methylthiazol-5(2H)-ylidene]ethyl phosphate contacts are provided by residues glycine 171 and 191–192; that span reads IS.

It belongs to the thiamine-phosphate synthase family. The cofactor is Mg(2+).

It carries out the reaction 2-[(2R,5Z)-2-carboxy-4-methylthiazol-5(2H)-ylidene]ethyl phosphate + 4-amino-2-methyl-5-(diphosphooxymethyl)pyrimidine + 2 H(+) = thiamine phosphate + CO2 + diphosphate. The enzyme catalyses 2-(2-carboxy-4-methylthiazol-5-yl)ethyl phosphate + 4-amino-2-methyl-5-(diphosphooxymethyl)pyrimidine + 2 H(+) = thiamine phosphate + CO2 + diphosphate. The catalysed reaction is 4-methyl-5-(2-phosphooxyethyl)-thiazole + 4-amino-2-methyl-5-(diphosphooxymethyl)pyrimidine + H(+) = thiamine phosphate + diphosphate. Its pathway is cofactor biosynthesis; thiamine diphosphate biosynthesis; thiamine phosphate from 4-amino-2-methyl-5-diphosphomethylpyrimidine and 4-methyl-5-(2-phosphoethyl)-thiazole: step 1/1. In terms of biological role, condenses 4-methyl-5-(beta-hydroxyethyl)thiazole monophosphate (THZ-P) and 2-methyl-4-amino-5-hydroxymethyl pyrimidine pyrophosphate (HMP-PP) to form thiamine monophosphate (TMP). This chain is Thiamine-phosphate synthase, found in Staphylococcus aureus (strain bovine RF122 / ET3-1).